Consider the following 354-residue polypeptide: Phenylalanine--tRNA ligase alpha subunit (354 aa).

Glu-279 serves as a coordination point for Mg(2+).

The protein belongs to the class-II aminoacyl-tRNA synthetase family. Phe-tRNA synthetase alpha subunit type 1 subfamily. As to quaternary structure, tetramer of two alpha and two beta subunits. The cofactor is Mg(2+).

The protein resides in the cytoplasm. It carries out the reaction tRNA(Phe) + L-phenylalanine + ATP = L-phenylalanyl-tRNA(Phe) + AMP + diphosphate + H(+). This is Phenylalanine--tRNA ligase alpha subunit from Cupriavidus pinatubonensis (strain JMP 134 / LMG 1197) (Cupriavidus necator (strain JMP 134)).